The primary structure comprises 396 residues: Multidrug resistance protein MdtL (396 aa).

The Cytoplasmic segment spans residues 1 to 4 (MFRY). A helical transmembrane segment spans residues 5–25 (LLCCFGLVLMYPTGIDMYLVG). The Periplasmic segment spans residues 26 to 41 (LPQIANQLGATEAQLH). The helical transmembrane segment at 42-62 (IAFSVYLAGMATTMLFAGSLA) threads the bilayer. The Cytoplasmic segment spans residues 63 to 64 (DR). The chain crosses the membrane as a helical span at residues 65–85 (IGRKPITLFSALLFALASYFA). The Periplasmic portion of the chain corresponds to 86 to 92 (ARSQSSD). A helical membrane pass occupies residues 93 to 113 (LFLVARFVQGVGAGCCYVVAF). The Cytoplasmic segment spans residues 114-131 (AILRDALDDKRRAKVLSM). A helical membrane pass occupies residues 132-152 (VNGVTCIIPVIAPVIGHLIML). Residues 153–157 (RFPWP) lie on the Periplasmic side of the membrane. The chain crosses the membrane as a helical span at residues 158–178 (SLFYTMAVMGLLVFGLCLFVL). At 179-209 (RETYSKASFHSQTLPRVQTESFKQGFFISRV) the chain is on the cytoplasmic side. Residues 210 to 230 (VITTLGVTTILSYVNVSPMLI) form a helical membrane-spanning segment. The Periplasmic portion of the chain corresponds to 231 to 242 (MGQMGFDRGQYS). Residues 243 to 263 (NTMAMTALVSMLASFSTPFLL) traverse the membrane as a helical segment. At 264–277 (NQFKEKSLILFSQT) the chain is on the cytoplasmic side. 2 consecutive transmembrane segments (helical) span residues 278–298 (LFAA…GQLF) and 299–319 (NLLG…VTMS). Over 320 to 333 (QALSPFVARAGVAS) the chain is Cytoplasmic. The chain crosses the membrane as a helical span at residues 334–354 (SLLGIAQVCTSALYIWVMGLL). The Periplasmic segment spans residues 355 to 360 (EVSAIN). A helical transmembrane segment spans residues 361-381 (ILLAILAVGALISITLMLAVP). Topologically, residues 382 to 396 (KLSEMVANEQIPESA) are cytoplasmic.

The protein belongs to the major facilitator superfamily. DHA1 family. MdtL (TC 2.A.1.2.22) subfamily.

The protein localises to the cell inner membrane. The chain is Multidrug resistance protein MdtL from Shewanella sp. (strain ANA-3).